A 608-amino-acid polypeptide reads, in one-letter code: Aspartate--tRNA(Asp/Asn) ligase (608 aa).

Glutamate 187 is a binding site for L-aspartate. The segment at glutamine 211–lysine 214 is aspartate. Arginine 233 and histidine 461 together coordinate L-aspartate. Arginine 233–glutamate 235 lines the ATP pocket. Residue glutamate 495 coordinates ATP. Arginine 502 contacts L-aspartate. Position 547-550 (glycine 547–arginine 550) interacts with ATP.

The protein belongs to the class-II aminoacyl-tRNA synthetase family. Type 1 subfamily. In terms of assembly, homodimer.

It localises to the cytoplasm. It carries out the reaction tRNA(Asx) + L-aspartate + ATP = L-aspartyl-tRNA(Asx) + AMP + diphosphate. Aspartyl-tRNA synthetase with relaxed tRNA specificity since it is able to aspartylate not only its cognate tRNA(Asp) but also tRNA(Asn). Reaction proceeds in two steps: L-aspartate is first activated by ATP to form Asp-AMP and then transferred to the acceptor end of tRNA(Asp/Asn). In Prosthecochloris aestuarii (strain DSM 271 / SK 413), this protein is Aspartate--tRNA(Asp/Asn) ligase.